The following is a 100-amino-acid chain: Dromyosuppressin (100 aa).

A signal peptide spans 1-24 (MSFAQFFVACCLAIVLLAVSNTRA). A propeptide spanning residues 25–84 (AVQGPPLCQSGIVEEMPPHIRKVCQALENSDQLTSALKSYINNEASALVANSDDLLKNYN) is cleaved from the precursor. Residue Phe-96 is modified to Phenylalanine amide.

Belongs to the myosuppressin family.

Its subcellular location is the secreted. Myoinhibiting neuropeptide. The protein is Dromyosuppressin of Drosophila melanogaster (Fruit fly).